The chain runs to 248 residues: Deoxyribose-phosphate aldolase (248 aa).

D117 (proton donor/acceptor) is an active-site residue. K179 (schiff-base intermediate with acetaldehyde) is an active-site residue. The active-site Proton donor/acceptor is K208.

Belongs to the DeoC/FbaB aldolase family. DeoC type 1 subfamily.

The protein resides in the cytoplasm. The catalysed reaction is 2-deoxy-D-ribose 5-phosphate = D-glyceraldehyde 3-phosphate + acetaldehyde. The protein operates within carbohydrate degradation; 2-deoxy-D-ribose 1-phosphate degradation; D-glyceraldehyde 3-phosphate and acetaldehyde from 2-deoxy-alpha-D-ribose 1-phosphate: step 2/2. Its function is as follows. Catalyzes a reversible aldol reaction between acetaldehyde and D-glyceraldehyde 3-phosphate to generate 2-deoxy-D-ribose 5-phosphate. In Thermotoga sp. (strain RQ2), this protein is Deoxyribose-phosphate aldolase.